The chain runs to 88 residues: Small ribosomal subunit protein uS17 (88 aa).

This sequence belongs to the universal ribosomal protein uS17 family. As to quaternary structure, part of the 30S ribosomal subunit.

Its function is as follows. One of the primary rRNA binding proteins, it binds specifically to the 5'-end of 16S ribosomal RNA. This is Small ribosomal subunit protein uS17 from Marinobacter nauticus (strain ATCC 700491 / DSM 11845 / VT8) (Marinobacter aquaeolei).